A 298-amino-acid chain; its full sequence is Succinate dehydrogenase [ubiquinone] iron-sulfur subunit, mitochondrial (298 aa).

The region spanning 59-147 (YRFNPEAPGA…STKIYPLPHM (89 aa)) is the 2Fe-2S ferredoxin-type domain. Cys-107, Cys-112, Cys-115, and Cys-127 together coordinate [2Fe-2S] cluster. Residues 190 to 220 (ERDRLDGLYECILCACCSTSCPSYWWNADKY) enclose the 4Fe-4S ferredoxin-type domain. [4Fe-4S] cluster contacts are provided by Cys-200, Cys-203, and Cys-206. Cys-210 serves as a coordination point for [3Fe-4S] cluster. Trp-215 lines the a ubiquinone pocket. Residues Cys-257 and Cys-263 each contribute to the [3Fe-4S] cluster site. Cys-267 is a [4Fe-4S] cluster binding site.

This sequence belongs to the succinate dehydrogenase/fumarate reductase iron-sulfur protein family. Component of complex II composed of four subunits: a flavoprotein (FP), an iron-sulfur protein (IP), and a cytochrome b composed of a large and a small subunit. The cofactor is [2Fe-2S] cluster. [3Fe-4S] cluster is required as a cofactor. [4Fe-4S] cluster serves as cofactor.

Its subcellular location is the mitochondrion inner membrane. It catalyses the reaction a quinone + succinate = fumarate + a quinol. The protein operates within carbohydrate metabolism; tricarboxylic acid cycle; fumarate from succinate (eukaryal route): step 1/1. Iron-sulfur protein (IP) subunit of succinate dehydrogenase (SDH) that is involved in complex II of the mitochondrial electron transport chain and is responsible for transferring electrons from succinate to ubiquinone (coenzyme Q). This chain is Succinate dehydrogenase [ubiquinone] iron-sulfur subunit, mitochondrial (sdhb-1), found in Caenorhabditis elegans.